The sequence spans 81 residues: MKTLLLTLVVVTIVCLDLGYTLKCNKLIPIASKTCPAGKNLCYKMFMVATPKVPVKRGCIDVCPKSSLLVKYVCCNTDRCN.

A signal peptide spans 1–21 (MKTLLLTLVVVTIVCLDLGYT). 4 disulfide bridges follow: C24–C42, C35–C59, C63–C74, and C75–C80.

This sequence belongs to the three-finger toxin family. Short-chain subfamily. Type IA cytotoxin sub-subfamily. As to quaternary structure, monomer in solution; Homodimer and oligomer in the presence of negatively charged lipids forming a pore with a size ranging between 20 and 30 Angstroms. As to expression, expressed by the venom gland.

Its subcellular location is the secreted. The protein resides in the target cell membrane. Its function is as follows. Shows cytolytic activity on many different cells by forming pore in lipid membranes. In vivo, increases heart rate or kills the animal by cardiac arrest. In addition, it binds to heparin with high affinity, interacts with Kv channel-interacting protein 1 (KCNIP1) in a calcium-independent manner, and binds to integrin alpha-V/beta-3 (ITGAV/ITGB3) with moderate affinity. The sequence is that of Cytotoxin 8 from Naja atra (Chinese cobra).